The sequence spans 273 residues: MSDMRLIVAGAGGRMGRALIRAITESAGATIVGALEAPTSKWLGEDAGTLAGLPANGVKLSADLWALSADADGILDFTVPAATLANVAIAAQRGLVHVIGTTGLSASDDAVIKSVTNQAVVVKSGNMSLGVNLLAALVKQVAKSLDDNFDIEIVEMHHKAKVDAPSGTALLLGEAAAWGRGIDLNAHSARGRDGVTGARRAGDIGFASLRGGTVTGDHTVIFAGPYERIELTHKAEDRMIFANGALKAALWARGRAPGLYSMADVLGLGNAST.

Residues 10–15, Glu-36, 100–102, and 124–127 contribute to the NAD(+) site; these read GAGGRM, GTT, and SGNM. Catalysis depends on His-157, which acts as the Proton donor/acceptor. (S)-2,3,4,5-tetrahydrodipicolinate is bound at residue His-158. Residue Lys-161 is the Proton donor of the active site. 167–168 is a (S)-2,3,4,5-tetrahydrodipicolinate binding site; that stretch reads GT.

Belongs to the DapB family.

It localises to the cytoplasm. It carries out the reaction (S)-2,3,4,5-tetrahydrodipicolinate + NAD(+) + H2O = (2S,4S)-4-hydroxy-2,3,4,5-tetrahydrodipicolinate + NADH + H(+). The catalysed reaction is (S)-2,3,4,5-tetrahydrodipicolinate + NADP(+) + H2O = (2S,4S)-4-hydroxy-2,3,4,5-tetrahydrodipicolinate + NADPH + H(+). The protein operates within amino-acid biosynthesis; L-lysine biosynthesis via DAP pathway; (S)-tetrahydrodipicolinate from L-aspartate: step 4/4. Catalyzes the conversion of 4-hydroxy-tetrahydrodipicolinate (HTPA) to tetrahydrodipicolinate. This Rhodopseudomonas palustris (strain BisA53) protein is 4-hydroxy-tetrahydrodipicolinate reductase.